The primary structure comprises 430 residues: Methylenetetrahydrofolate--tRNA-(uracil-5-)-methyltransferase TrmFO (430 aa).

FAD is bound at residue 9 to 14 (GAGLAG).

Belongs to the MnmG family. TrmFO subfamily. FAD is required as a cofactor.

The protein localises to the cytoplasm. It catalyses the reaction uridine(54) in tRNA + (6R)-5,10-methylene-5,6,7,8-tetrahydrofolate + NADH + H(+) = 5-methyluridine(54) in tRNA + (6S)-5,6,7,8-tetrahydrofolate + NAD(+). The enzyme catalyses uridine(54) in tRNA + (6R)-5,10-methylene-5,6,7,8-tetrahydrofolate + NADPH + H(+) = 5-methyluridine(54) in tRNA + (6S)-5,6,7,8-tetrahydrofolate + NADP(+). Catalyzes the folate-dependent formation of 5-methyl-uridine at position 54 (M-5-U54) in all tRNAs. This Fervidobacterium nodosum (strain ATCC 35602 / DSM 5306 / Rt17-B1) protein is Methylenetetrahydrofolate--tRNA-(uracil-5-)-methyltransferase TrmFO.